A 367-amino-acid chain; its full sequence is Quinolinate synthase (367 aa).

Residues His-45 and Ser-62 each contribute to the iminosuccinate site. Cys-109 is a binding site for [4Fe-4S] cluster. Iminosuccinate is bound by residues 140–142 (YVN) and Ser-161. Residue Cys-229 coordinates [4Fe-4S] cluster. Residues 255-257 (HPE) and Thr-272 contribute to the iminosuccinate site. Position 319 (Cys-319) interacts with [4Fe-4S] cluster.

This sequence belongs to the quinolinate synthase family. Type 3 subfamily. [4Fe-4S] cluster is required as a cofactor.

Its subcellular location is the cytoplasm. It carries out the reaction iminosuccinate + dihydroxyacetone phosphate = quinolinate + phosphate + 2 H2O + H(+). The protein operates within cofactor biosynthesis; NAD(+) biosynthesis; quinolinate from iminoaspartate: step 1/1. Functionally, catalyzes the condensation of iminoaspartate with dihydroxyacetone phosphate to form quinolinate. This chain is Quinolinate synthase, found in Geobacillus kaustophilus (strain HTA426).